A 223-amino-acid polypeptide reads, in one-letter code: Cuticular glutathione peroxidase (223 aa).

Positions Met1–Ala19 are cleaved as a signal peptide. An N-linked (GlcNAc...) asparagine glycan is attached at Asn39. Residue Cys74 is part of the active site. Asn92 is a glycosylation site (N-linked (GlcNAc...) asparagine).

This sequence belongs to the glutathione peroxidase family. As to quaternary structure, homotetramer.

It localises to the secreted. It catalyses the reaction 2 glutathione + H2O2 = glutathione disulfide + 2 H2O. Could inhibit the oxidative burst of leukocytes and neutralize the secondary products of lipid peroxidation, thus providing the resistance of these parasites to immune effector mechanisms and their persistence in the mammalian host. It may also be involved in the formation of cross-linking residues such as dityrosine, trityrosine and isotrityrosine identified in cuticular collagen. Highly cross-linked external cortex may also serve to protect the parasite from immune attack. This chain is Cuticular glutathione peroxidase, found in Wuchereria bancrofti.